The following is a 288-amino-acid chain: Oxaloacetate decarboxylase (288 aa).

Ser47 lines the substrate pocket. Asp85 contacts Mg(2+). Substrate-binding residues include Arg156 and His232.

The protein belongs to the isocitrate lyase/PEP mutase superfamily. Oxaloacetate decarboxylase family. As to quaternary structure, homotetramer; dimer of dimers. Mg(2+) is required as a cofactor.

It catalyses the reaction oxaloacetate + H(+) = pyruvate + CO2. In terms of biological role, catalyzes the decarboxylation of oxaloacetate into pyruvate. Seems to play a role in maintaining cellular concentrations of bicarbonate and pyruvate. The chain is Oxaloacetate decarboxylase from Bradyrhizobium sp. (strain ORS 278).